The following is a 111-amino-acid chain: Secreted RxLR effector protein 159 (111 aa).

An N-terminal signal peptide occupies residues 1–21 (MRGAYYVAIAFLVAASSRTAA). Residues 50 to 71 (RVLRGSRDLKDKLAVYANDEQR) carry the RxLR-dEER motif. A glycan (N-linked (GlcNAc...) asparagine) is linked at asparagine 81.

Belongs to the RxLR effector family.

It localises to the secreted. The protein localises to the host nucleus. It is found in the host cytoplasm. Functionally, secreted effector that completely suppresses the host cell death induced by cell death-inducing proteins. In Plasmopara viticola (Downy mildew of grapevine), this protein is Secreted RxLR effector protein 159.